Here is a 392-residue protein sequence, read N- to C-terminus: Tyrosine--tRNA ligase (392 aa).

Residues 39–48 (PTAPDIHIGH) carry the 'HIGH' region motif. Positions 223–227 (KMSKS) match the 'KMSKS' region motif. An ATP-binding site is contributed by lysine 226. An S4 RNA-binding domain is found at 331–391 (IGIAQLLKQA…GKRRFARVVL (61 aa)).

It belongs to the class-I aminoacyl-tRNA synthetase family. TyrS type 2 subfamily. Homodimer.

It is found in the cytoplasm. It carries out the reaction tRNA(Tyr) + L-tyrosine + ATP = L-tyrosyl-tRNA(Tyr) + AMP + diphosphate + H(+). In terms of biological role, catalyzes the attachment of tyrosine to tRNA(Tyr) in a two-step reaction: tyrosine is first activated by ATP to form Tyr-AMP and then transferred to the acceptor end of tRNA(Tyr). This Ralstonia nicotianae (strain ATCC BAA-1114 / GMI1000) (Ralstonia solanacearum) protein is Tyrosine--tRNA ligase.